Here is a 49-residue protein sequence, read N- to C-terminus: Disintegrin echistatin-gamma (49 aa).

A Disintegrin domain is found at 1–47; sequence DCASGPCCRDCKFLEEGTICNMARGDDMDDYCNGKTCDCPRNPHKWP. Disulfide bonds link Cys2/Cys11, Cys7/Cys32, Cys8/Cys37, and Cys20/Cys39. Residues 24–26 carry the Cell attachment site motif; sequence RGD.

Belongs to the venom metalloproteinase (M12B) family. P-II subfamily. P-IIa sub-subfamily. Monomer. As to expression, expressed by the venom gland.

It is found in the secreted. Has antiplatelet activities on guinea pig, followed by human, rabbit and rat platelet-rich plasma. The protein is Disintegrin echistatin-gamma of Echis pyramidum leakeyi (Leakey's carpet viper).